Here is a 366-residue protein sequence, read N- to C-terminus: tRNA-specific 2-thiouridylase MnmA (366 aa).

Residues 12–19 (GMSGGVDS) and M38 contribute to the ATP site. The interval 98-100 (NPD) is interaction with target base in tRNA. The Nucleophile role is filled by C103. An intrachain disulfide couples C103 to C200. G128 lines the ATP pocket. The tract at residues 150–152 (KDQ) is interaction with tRNA. The Cysteine persulfide intermediate role is filled by C200. The segment at 312–313 (RY) is interaction with tRNA.

It belongs to the MnmA/TRMU family.

The protein resides in the cytoplasm. The enzyme catalyses S-sulfanyl-L-cysteinyl-[protein] + uridine(34) in tRNA + AH2 + ATP = 2-thiouridine(34) in tRNA + L-cysteinyl-[protein] + A + AMP + diphosphate + H(+). Functionally, catalyzes the 2-thiolation of uridine at the wobble position (U34) of tRNA, leading to the formation of s(2)U34. The polypeptide is tRNA-specific 2-thiouridylase MnmA (Pseudoalteromonas translucida (strain TAC 125)).